Consider the following 89-residue polypeptide: Small ribosomal subunit protein uS15 (89 aa).

This sequence belongs to the universal ribosomal protein uS15 family. As to quaternary structure, part of the 30S ribosomal subunit. Forms a bridge to the 50S subunit in the 70S ribosome, contacting the 23S rRNA.

In terms of biological role, one of the primary rRNA binding proteins, it binds directly to 16S rRNA where it helps nucleate assembly of the platform of the 30S subunit by binding and bridging several RNA helices of the 16S rRNA. Forms an intersubunit bridge (bridge B4) with the 23S rRNA of the 50S subunit in the ribosome. The protein is Small ribosomal subunit protein uS15 of Janthinobacterium sp. (strain Marseille) (Minibacterium massiliensis).